The chain runs to 376 residues: Alcohol dehydrogenase class-3 (376 aa).

Positions 40, 62, 92, 95, 98, 106, and 170 each coordinate Zn(2+).

It belongs to the zinc-containing alcohol dehydrogenase family. Class-III subfamily. Homodimer. The cofactor is Zn(2+).

Its subcellular location is the cytoplasm. The enzyme catalyses a primary alcohol + NAD(+) = an aldehyde + NADH + H(+). It carries out the reaction a secondary alcohol + NAD(+) = a ketone + NADH + H(+). It catalyses the reaction S-(hydroxymethyl)glutathione + NADP(+) = S-formylglutathione + NADPH + H(+). The catalysed reaction is S-(hydroxymethyl)glutathione + NAD(+) = S-formylglutathione + NADH + H(+). Its function is as follows. Oxidizes long-chain aliphatic alcohols, long-chain hydroxylated fatty acids and S-hydroxymethylglutathione (hmGSH) in increasing order of preference. Shows little or no activity with short-chain aliphatic alcohols. The polypeptide is Alcohol dehydrogenase class-3 (adhI) (Cereibacter sphaeroides (strain ATCC 17023 / DSM 158 / JCM 6121 / CCUG 31486 / LMG 2827 / NBRC 12203 / NCIMB 8253 / ATH 2.4.1.) (Rhodobacter sphaeroides)).